A 242-amino-acid chain; its full sequence is Small ribosomal subunit protein uS2 (242 aa).

Belongs to the universal ribosomal protein uS2 family.

This Neisseria meningitidis serogroup B (strain ATCC BAA-335 / MC58) protein is Small ribosomal subunit protein uS2.